The chain runs to 341 residues: B3 domain-containing transcription factor VRN1 (341 aa).

The TF-B3 1 DNA-binding region spans Phe5–Ser98. The interval Gly166–Thr223 is disordered. The segment covering Ile179–Lys188 has biased composition (basic residues). Residues Pro200–Phe211 are compositionally biased toward basic and acidic residues. Residues Phe244–Asn338 constitute a DNA-binding region (TF-B3 2).

In terms of tissue distribution, expressed in roots and at lower levels in aerial parts.

The protein resides in the nucleus. Essential protein. Involved in the regulation of vernalization. Acts as a transcriptional repressor of FLC, a major target of the vernalization pathway. Binds DNA in vitro in a non-sequence-specific manner. In Arabidopsis thaliana (Mouse-ear cress), this protein is B3 domain-containing transcription factor VRN1.